The chain runs to 562 residues: SPI-1 type 3 secretion system secretin (562 aa).

The first 24 residues, 1–24 (MKTHILLARVLACAALVLVTPGYS), serve as a signal peptide directing secretion.

This sequence belongs to the bacterial secretin family. T3SS SctC subfamily. In terms of assembly, the core secretion machinery of the T3SS is composed of approximately 20 different proteins, including cytoplasmic components, a base, an export apparatus and a needle. This subunit is part of the base, which anchors the injectisome in the bacterial cell envelope. Forms a stable homooligomeric complex. The complex is composed of 15 subunits.

Its subcellular location is the cell outer membrane. Functionally, component of the type III secretion system (T3SS), also called injectisome, which is used to inject bacterial effector proteins into eukaryotic host cells. Forms a ring-shaped multimeric structure with an apparent central pore in the outer membrane. The polypeptide is SPI-1 type 3 secretion system secretin (Salmonella typhimurium (strain LT2 / SGSC1412 / ATCC 700720)).